A 95-amino-acid polypeptide reads, in one-letter code: Co-chaperonin GroES (95 aa).

Belongs to the GroES chaperonin family. As to quaternary structure, heptamer of 7 subunits arranged in a ring. Interacts with the chaperonin GroEL.

The protein resides in the cytoplasm. Together with the chaperonin GroEL, plays an essential role in assisting protein folding. The GroEL-GroES system forms a nano-cage that allows encapsulation of the non-native substrate proteins and provides a physical environment optimized to promote and accelerate protein folding. GroES binds to the apical surface of the GroEL ring, thereby capping the opening of the GroEL channel. This Marinobacter nauticus (strain ATCC 700491 / DSM 11845 / VT8) (Marinobacter aquaeolei) protein is Co-chaperonin GroES.